The sequence spans 100 residues: Large ribosomal subunit protein uL23 (100 aa).

Belongs to the universal ribosomal protein uL23 family. Part of the 50S ribosomal subunit. Contacts protein L29, and trigger factor when it is bound to the ribosome.

Functionally, one of the early assembly proteins it binds 23S rRNA. One of the proteins that surrounds the polypeptide exit tunnel on the outside of the ribosome. Forms the main docking site for trigger factor binding to the ribosome. In Kosmotoga olearia (strain ATCC BAA-1733 / DSM 21960 / TBF 19.5.1), this protein is Large ribosomal subunit protein uL23.